Consider the following 340-residue polypeptide: Immunoglobulin-binding protein 1 (340 aa).

Residues 47–61 (LELLEKAAGMLSQLD) form the UIM domain. Residues 99–203 (RLDHLQRARE…YLLHLRRWIG (105 aa)) are interaction with PPP2CA. Disordered stretches follow at residues 221-242 (DKDSPREESACQSSLPEKPPMK) and 281-340 (LPDR…QNMG). The tract at residues 226–291 (REESACQSSL…PDRGIAKPPS (66 aa)) is interaction with MID1. Lys-242 bears the N6-acetyllysine mark. Residues 292–301 (ADFQRAAQQQ) are compositionally biased toward low complexity. Residues 302 to 312 (EDQEQKDEENE) show a composition bias toward acidic residues. Residues 313-330 (EKALHRMREWDDWKDTHP) are compositionally biased toward basic and acidic residues.

This sequence belongs to the IGBP1/TAP42 family. As to quaternary structure, interacts with partially folded PPP2CA, but not with the fully active protein. Interacts with PPP2CB, and with PP4 and PP6. Interacts with MID1 and MID2. Interacts with ubiquitin. Post-translationally, phosphorylated. Monoubiquitination by MID1 triggers calpain-mediated cleavage and switches IGBP1 activity from protective to destructive.

Its subcellular location is the cytoplasm. Functionally, associated to surface IgM-receptor; may be involved in signal transduction. Involved in regulation of the catalytic activity of the phosphatases PP2A, PP4 and PP6 by protecting their partially folded catalytic subunits from degradative polyubiquitination until they associate with regulatory subunits. This is Immunoglobulin-binding protein 1 (Igbp1) from Rattus norvegicus (Rat).